The sequence spans 449 residues: Cysteine--tRNA ligase (449 aa).

Cys29 serves as a coordination point for Zn(2+). The 'HIGH' region signature appears at 31 to 41; it reads PTVYDHLHIGN. Positions 211, 236, and 240 each coordinate Zn(2+). The 'KMSKS' region signature appears at 269 to 273; that stretch reads KMSKS. Lys272 provides a ligand contact to ATP.

This sequence belongs to the class-I aminoacyl-tRNA synthetase family. In terms of assembly, monomer. Requires Zn(2+) as cofactor.

The protein resides in the cytoplasm. It carries out the reaction tRNA(Cys) + L-cysteine + ATP = L-cysteinyl-tRNA(Cys) + AMP + diphosphate. This is Cysteine--tRNA ligase from Methylocella silvestris (strain DSM 15510 / CIP 108128 / LMG 27833 / NCIMB 13906 / BL2).